We begin with the raw amino-acid sequence, 598 residues long: Elongation factor 4 (598 aa).

The region spanning 5-187 (ANIRNFSIIA…ALVEFIPAPT (183 aa)) is the tr-type G domain. GTP-binding positions include 17 to 22 (DHGKST) and 134 to 137 (NKID).

Belongs to the TRAFAC class translation factor GTPase superfamily. Classic translation factor GTPase family. LepA subfamily.

The protein localises to the cell inner membrane. It carries out the reaction GTP + H2O = GDP + phosphate + H(+). Functionally, required for accurate and efficient protein synthesis under certain stress conditions. May act as a fidelity factor of the translation reaction, by catalyzing a one-codon backward translocation of tRNAs on improperly translocated ribosomes. Back-translocation proceeds from a post-translocation (POST) complex to a pre-translocation (PRE) complex, thus giving elongation factor G a second chance to translocate the tRNAs correctly. Binds to ribosomes in a GTP-dependent manner. This Psychrobacter arcticus (strain DSM 17307 / VKM B-2377 / 273-4) protein is Elongation factor 4.